A 111-amino-acid polypeptide reads, in one-letter code: uncharacterized protein (111 aa).

The protein resides in the mitochondrion. This is an uncharacterized protein from Arabidopsis thaliana (Mouse-ear cress).